A 1271-amino-acid polypeptide reads, in one-letter code: SR-related and CTD-associated factor 8 (1271 aa).

One can recognise a CID domain in the interval 1-139 (MEAVKTFNSE…PLLDMAAGIP (139 aa)). A Phosphothreonine modification is found at T6. Residue K18 forms a Glycyl lysine isopeptide (Lys-Gly) (interchain with G-Cter in SUMO1) linkage. Positions 270–283 (GEDSEHSEEPKKEI) are enriched in basic and acidic residues. Disordered regions lie at residues 270 to 289 (GEDS…SQLS), 322 to 354 (QQQP…SQQH), and 384 to 468 (EEVF…PPIR). S273 bears the Phosphoserine mark. A compositionally biased stretch (polar residues) spans 327–354 (KATPQDSQEGTFGSEHSASPSQGSSQQH). The span at 394–443 (VAVRSRSRTHSRSRSRSPRKRRSRSRSGSRKRKHRKRSRSRSRERKRKSS) shows a compositional bias: basic residues. The segment covering 447-461 (SSERRAREREKERQK) has biased composition (basic and acidic residues). The RRM domain maps to 477-551 (TTLWVGQVDK…KVIKIAWALN (75 aa)). Phosphothreonine is present on T615. Phosphoserine is present on residues S617 and S779. A disordered region spans residues 899-918 (TQPPAGPQNLPPLSIPNQRM). Residues 902 to 912 (PAGPQNLPPLS) show a composition bias toward pro residues. An asymmetric dimethylarginine mark is found at R917, R927, and R938. Pro residues-rich tracts occupy residues 945-956 (GIPPQRGIPPPS) and 963-972 (HPPPRGPFPP). The disordered stretch occupies residues 945-1064 (GIPPQRGIPP…DGRDHFGRPP (120 aa)). Basic and acidic residues-rich tracts occupy residues 1011–1027 (EGDR…RESI) and 1034–1064 (DVRD…GRPP). An Asymmetric dimethylarginine modification is found at R1073. The disordered stretch occupies residues 1198-1271 (YFEGATSQRK…VVESTETEGT (74 aa)). The segment covering 1255 to 1271 (ADIESEPVVESTETEGT) has biased composition (acidic residues).

Interacts with POLR2A; via C-terminal heptapeptide repeat domain (CTD) phosphorylated at 'Ser-2' and 'Ser-5'. Identified in a complex with CDC5L and other spliceosomal proteins.

The protein localises to the nucleus. Its subcellular location is the nucleus matrix. Functionally, anti-terminator protein required to prevent early mRNA termination during transcription. Together with SCAF4, acts by suppressing the use of early, alternative poly(A) sites, thereby preventing the accumulation of non-functional truncated proteins. Mechanistically, associates with the phosphorylated C-terminal heptapeptide repeat domain (CTD) of the largest RNA polymerase II subunit (POLR2A), and subsequently binds nascent RNA upstream of early polyadenylation sites to prevent premature mRNA transcript cleavage and polyadenylation. Independently of SCAF4, also acts as a positive regulator of transcript elongation. This is SR-related and CTD-associated factor 8 from Homo sapiens (Human).